The following is a 558-amino-acid chain: Urease subunit alpha 2 (558 aa).

Positions 129-558 constitute a Urease domain; sequence GAVDTHVHLL…SVSLNRLYFL (430 aa). Residues histidine 134, histidine 136, and lysine 214 each coordinate Ni(2+). An N6-carboxylysine modification is found at lysine 214. Histidine 216 is a substrate binding site. The Ni(2+) site is built by histidine 243 and histidine 269. Histidine 317 functions as the Proton donor in the catalytic mechanism. Aspartate 357 contributes to the Ni(2+) binding site.

This sequence belongs to the metallo-dependent hydrolases superfamily. Urease alpha subunit family. In terms of assembly, may form a heterohexamer of 3 UreC (alpha) and 3 UreAB (gamma/beta) subunits. May also form a heterotrimer of UreA (gamma), UreB (beta) and UreC (alpha) subunits. Three heterotrimers associate to form the active enzyme. Ni cation is required as a cofactor. Carboxylation allows a single lysine to coordinate two nickel ions.

The protein localises to the cytoplasm. It carries out the reaction urea + 2 H2O + H(+) = hydrogencarbonate + 2 NH4(+). The protein operates within nitrogen metabolism; urea degradation; CO(2) and NH(3) from urea (urease route): step 1/1. This is Urease subunit alpha 2 from Streptomyces coelicolor (strain ATCC BAA-471 / A3(2) / M145).